The primary structure comprises 55 residues: Large ribosomal subunit protein bL33B (55 aa).

The protein belongs to the bacterial ribosomal protein bL33 family.

The sequence is that of Large ribosomal subunit protein bL33B from Rhodococcus jostii (strain RHA1).